We begin with the raw amino-acid sequence, 378 residues long: TelA-like protein SAS1347 (378 aa).

The protein belongs to the TelA family.

This chain is TelA-like protein SAS1347, found in Staphylococcus aureus (strain MSSA476).